Here is a 949-residue protein sequence, read N- to C-terminus: AP-1 complex subunit beta-1 (949 aa).

Lys-318 is subject to N6-acetyllysine. The residue at position 574 (Tyr-574) is a 3'-nitrotyrosine. The disordered stretch occupies residues 584–625; it reads GGRGVVHKSLPPRTASSESAESPETAPTGAPPGEQPDVIPAQ. The segment covering 594–611 has biased composition (low complexity); sequence PPRTASSESAESPETAPT.

It belongs to the adaptor complexes large subunit family. In terms of assembly, adaptor protein complex 1 (AP-1) is a heterotetramer composed of two large adaptins (gamma-type subunit AP1G1 and beta-type subunit AP1B1), a medium adaptin (mu-type subunit AP1M1 or AP1M2) and a small adaptin (sigma-type subunit AP1S1 or AP1S2 or AP1S3). Widely expressed.

Its subcellular location is the golgi apparatus. It is found in the cytoplasmic vesicle. It localises to the clathrin-coated vesicle membrane. Subunit of clathrin-associated adaptor protein complex 1 that plays a role in protein sorting in the late-Golgi/trans-Golgi network (TGN) and/or endosomes. The AP complexes mediate both the recruitment of clathrin to membranes and the recognition of sorting signals within the cytosolic tails of transmembrane cargo molecules. This is AP-1 complex subunit beta-1 (AP1B1) from Homo sapiens (Human).